The primary structure comprises 411 residues: Multifunctional CCA protein (411 aa).

2 residues coordinate ATP: G8 and R11. Positions 8 and 11 each coordinate CTP. Residues D21 and D23 each contribute to the Mg(2+) site. ATP-binding residues include R91, R143, and R146. CTP is bound by residues R91, R143, and R146. The region spanning 232–333 (TGVHVMMVID…MRLLERCDAL (102 aa)) is the HD domain.

Belongs to the tRNA nucleotidyltransferase/poly(A) polymerase family. Bacterial CCA-adding enzyme type 1 subfamily. Monomer. Can also form homodimers and oligomers. Mg(2+) is required as a cofactor. The cofactor is Ni(2+).

The catalysed reaction is a tRNA precursor + 2 CTP + ATP = a tRNA with a 3' CCA end + 3 diphosphate. The enzyme catalyses a tRNA with a 3' CCA end + 2 CTP + ATP = a tRNA with a 3' CCACCA end + 3 diphosphate. Catalyzes the addition and repair of the essential 3'-terminal CCA sequence in tRNAs without using a nucleic acid template. Adds these three nucleotides in the order of C, C, and A to the tRNA nucleotide-73, using CTP and ATP as substrates and producing inorganic pyrophosphate. tRNA 3'-terminal CCA addition is required both for tRNA processing and repair. Also involved in tRNA surveillance by mediating tandem CCA addition to generate a CCACCA at the 3' terminus of unstable tRNAs. While stable tRNAs receive only 3'-terminal CCA, unstable tRNAs are marked with CCACCA and rapidly degraded. The chain is Multifunctional CCA protein from Cupriavidus necator (strain ATCC 17699 / DSM 428 / KCTC 22496 / NCIMB 10442 / H16 / Stanier 337) (Ralstonia eutropha).